The chain runs to 855 residues: DNA mismatch repair protein MutS (855 aa).

Residue Gly-616–Ser-623 coordinates ATP.

Belongs to the DNA mismatch repair MutS family.

Functionally, this protein is involved in the repair of mismatches in DNA. It is possible that it carries out the mismatch recognition step. This protein has a weak ATPase activity. The protein is DNA mismatch repair protein MutS of Salmonella paratyphi A (strain ATCC 9150 / SARB42).